A 295-amino-acid chain; its full sequence is Xyloglucan endotransglucosylase/hydrolase (295 aa).

Positions methionine 1–alanine 23 are cleaved as a signal peptide. Residues proline 25–tyrosine 222 enclose the GH16 domain. Catalysis depends on glutamate 108, which acts as the Nucleophile. Glutamate 112 functions as the Proton donor in the catalytic mechanism. A xyloglucan-binding site is contributed by glutamate 112. Asparagine 116 carries N-linked (GlcNAc...) asparagine glycosylation. Xyloglucan is bound by residues glutamine 125–asparagine 127, asparagine 135–glutamate 137, aspartate 201–tryptophan 202, and glycine 206. Disulfide bonds link cysteine 230–cysteine 239 and cysteine 276–cysteine 289. Arginine 281 lines the xyloglucan pocket.

It belongs to the glycosyl hydrolase 16 family. XTH group 1 subfamily. Post-translationally, contains at least one intrachain disulfide bond essential for its enzymatic activity. In terms of processing, the N-glycan consists of an (GlcNAc)2(Hex)6 oligosaccharide; not essential for its enzymatic activity.

The protein resides in the secreted. Its subcellular location is the cell wall. It localises to the extracellular space. It is found in the apoplast. It carries out the reaction breaks a beta-(1-&gt;4) bond in the backbone of a xyloglucan and transfers the xyloglucanyl segment on to O-4 of the non-reducing terminal glucose residue of an acceptor, which can be a xyloglucan or an oligosaccharide of xyloglucan.. Its function is as follows. Catalyzes xyloglucan endohydrolysis (XEH) and/or endotransglycosylation (XET). Cleaves and religates xyloglucan polymers, an essential constituent of the primary cell wall, and thereby participates in cell wall construction of growing tissues. This Brassica oleracea var. botrytis (Cauliflower) protein is Xyloglucan endotransglucosylase/hydrolase (XET16A).